The primary structure comprises 418 residues: Tryptophan synthase beta chain (418 aa).

Over residues 1-12 (MTSTLPTANTPD) the composition is skewed to polar residues. The tract at residues 1–21 (MTSTLPTANTPDPASLMPSVR) is disordered. K111 is modified (N6-(pyridoxal phosphate)lysine).

The protein belongs to the TrpB family. Tetramer of two alpha and two beta chains. It depends on pyridoxal 5'-phosphate as a cofactor.

The enzyme catalyses (1S,2R)-1-C-(indol-3-yl)glycerol 3-phosphate + L-serine = D-glyceraldehyde 3-phosphate + L-tryptophan + H2O. It participates in amino-acid biosynthesis; L-tryptophan biosynthesis; L-tryptophan from chorismate: step 5/5. In terms of biological role, the beta subunit is responsible for the synthesis of L-tryptophan from indole and L-serine. The sequence is that of Tryptophan synthase beta chain from Synechococcus sp. (strain CC9311).